The following is a 298-amino-acid chain: GTPase Era (298 aa).

In terms of domain architecture, Era-type G spans K3–E170. A G1 region spans residues G11–S18. G11–S18 serves as a coordination point for GTP. The segment at Q37–N41 is G2. The interval D58 to G61 is G3. GTP-binding positions include D58–I62 and N120–D123. Residues N120–D123 are G4. The G5 stretch occupies residues I149–A151. Residues T201–K279 form the KH type-2 domain.

The protein belongs to the TRAFAC class TrmE-Era-EngA-EngB-Septin-like GTPase superfamily. Era GTPase family. Monomer.

It localises to the cytoplasm. It is found in the cell membrane. In terms of biological role, an essential GTPase that binds both GDP and GTP, with rapid nucleotide exchange. Plays a role in 16S rRNA processing and 30S ribosomal subunit biogenesis and possibly also in cell cycle regulation and energy metabolism. This is GTPase Era from Streptococcus pyogenes serotype M4 (strain MGAS10750).